Reading from the N-terminus, the 508-residue chain is 2-isopropylmalate synthase (508 aa).

One can recognise a Pyruvate carboxyltransferase domain in the interval 5–267 (IKIFDTTLRD…THRIDTTQIY (263 aa)). D14, H202, H204, and N238 together coordinate Mn(2+). Residues 390–508 (VIDSFQINSG…SEIGESIISQ (119 aa)) are regulatory domain.

This sequence belongs to the alpha-IPM synthase/homocitrate synthase family. LeuA type 1 subfamily. Homodimer. It depends on Mn(2+) as a cofactor.

It localises to the cytoplasm. It catalyses the reaction 3-methyl-2-oxobutanoate + acetyl-CoA + H2O = (2S)-2-isopropylmalate + CoA + H(+). The protein operates within amino-acid biosynthesis; L-leucine biosynthesis; L-leucine from 3-methyl-2-oxobutanoate: step 1/4. Functionally, catalyzes the condensation of the acetyl group of acetyl-CoA with 3-methyl-2-oxobutanoate (2-ketoisovalerate) to form 3-carboxy-3-hydroxy-4-methylpentanoate (2-isopropylmalate). This chain is 2-isopropylmalate synthase, found in Ruminiclostridium cellulolyticum (strain ATCC 35319 / DSM 5812 / JCM 6584 / H10) (Clostridium cellulolyticum).